The following is a 348-amino-acid chain: Holliday junction branch migration complex subunit RuvB (348 aa).

Positions 1-184 (MTLNRDMVSP…FGIVQRLEFY (184 aa)) are large ATPase domain (RuvB-L). ATP-binding residues include Leu-23, Arg-24, Gly-65, Lys-68, Thr-69, Thr-70, Arg-174, Tyr-184, and Arg-221. Mg(2+) is bound at residue Thr-69. The interval 185–255 (AVDHLVLIVE…VAQKALDLLD (71 aa)) is small ATPAse domain (RuvB-S). Residues 258-348 (SHGFDTMDRK…QEVSDLFPNE (91 aa)) form a head domain (RuvB-H) region. Arg-294, Arg-313, and Arg-318 together coordinate DNA.

It belongs to the RuvB family. As to quaternary structure, homohexamer. Forms an RuvA(8)-RuvB(12)-Holliday junction (HJ) complex. HJ DNA is sandwiched between 2 RuvA tetramers; dsDNA enters through RuvA and exits via RuvB. An RuvB hexamer assembles on each DNA strand where it exits the tetramer. Each RuvB hexamer is contacted by two RuvA subunits (via domain III) on 2 adjacent RuvB subunits; this complex drives branch migration. In the full resolvosome a probable DNA-RuvA(4)-RuvB(12)-RuvC(2) complex forms which resolves the HJ.

Its subcellular location is the cytoplasm. It catalyses the reaction ATP + H2O = ADP + phosphate + H(+). The RuvA-RuvB-RuvC complex processes Holliday junction (HJ) DNA during genetic recombination and DNA repair, while the RuvA-RuvB complex plays an important role in the rescue of blocked DNA replication forks via replication fork reversal (RFR). RuvA specifically binds to HJ cruciform DNA, conferring on it an open structure. The RuvB hexamer acts as an ATP-dependent pump, pulling dsDNA into and through the RuvAB complex. RuvB forms 2 homohexamers on either side of HJ DNA bound by 1 or 2 RuvA tetramers; 4 subunits per hexamer contact DNA at a time. Coordinated motions by a converter formed by DNA-disengaged RuvB subunits stimulates ATP hydrolysis and nucleotide exchange. Immobilization of the converter enables RuvB to convert the ATP-contained energy into a lever motion, pulling 2 nucleotides of DNA out of the RuvA tetramer per ATP hydrolyzed, thus driving DNA branch migration. The RuvB motors rotate together with the DNA substrate, which together with the progressing nucleotide cycle form the mechanistic basis for DNA recombination by continuous HJ branch migration. Branch migration allows RuvC to scan DNA until it finds its consensus sequence, where it cleaves and resolves cruciform DNA. This is Holliday junction branch migration complex subunit RuvB from Nitrosococcus oceani (strain ATCC 19707 / BCRC 17464 / JCM 30415 / NCIMB 11848 / C-107).